A 137-amino-acid chain; its full sequence is Large ribosomal subunit protein uL16 (137 aa).

It belongs to the universal ribosomal protein uL16 family. Part of the 50S ribosomal subunit.

Its function is as follows. Binds 23S rRNA and is also seen to make contacts with the A and possibly P site tRNAs. This chain is Large ribosomal subunit protein uL16, found in Ruegeria pomeroyi (strain ATCC 700808 / DSM 15171 / DSS-3) (Silicibacter pomeroyi).